Reading from the N-terminus, the 721-residue chain is Polyribonucleotide nucleotidyltransferase (721 aa).

2 residues coordinate Mg(2+): Asp-495 and Asp-501. Positions 562–621 (PRITTIKIRPERIKDIIGPGGKTIKDITARTGTSINIEDDGSVSIASPNQDKVEEAIKMI) constitute a KH domain. One can recognise an S1 motif domain in the interval 631 to 699 (GRIYMGTVRK…RSGKIRLSRK (69 aa)). Positions 699–721 (KEALADSAKKSEGTEPPKGEPAK) are disordered.

Belongs to the polyribonucleotide nucleotidyltransferase family. Requires Mg(2+) as cofactor.

The protein localises to the cytoplasm. The catalysed reaction is RNA(n+1) + phosphate = RNA(n) + a ribonucleoside 5'-diphosphate. Functionally, involved in mRNA degradation. Catalyzes the phosphorolysis of single-stranded polyribonucleotides processively in the 3'- to 5'-direction. This is Polyribonucleotide nucleotidyltransferase from Anaeromyxobacter dehalogenans (strain 2CP-C).